A 758-amino-acid chain; its full sequence is 5-methyltetrahydropteroyltriglutamate--homocysteine methyltransferase (758 aa).

5-methyltetrahydropteroyltri-L-glutamate is bound by residues 17 to 20 (RELK) and lysine 117. Residues 434 to 436 (IGS) and glutamate 487 each bind L-homocysteine. L-methionine is bound by residues 434 to 436 (IGS) and glutamate 487. 5-methyltetrahydropteroyltri-L-glutamate is bound by residues 518–519 (RC) and tryptophan 564. Aspartate 602 is a binding site for L-homocysteine. L-methionine is bound at residue aspartate 602. Glutamate 608 contacts 5-methyltetrahydropteroyltri-L-glutamate. Positions 644, 646, and 668 each coordinate Zn(2+). The active-site Proton donor is the histidine 697. A Zn(2+)-binding site is contributed by cysteine 729.

This sequence belongs to the vitamin-B12 independent methionine synthase family. Zn(2+) is required as a cofactor.

The enzyme catalyses 5-methyltetrahydropteroyltri-L-glutamate + L-homocysteine = tetrahydropteroyltri-L-glutamate + L-methionine. It functions in the pathway amino-acid biosynthesis; L-methionine biosynthesis via de novo pathway; L-methionine from L-homocysteine (MetE route): step 1/1. Catalyzes the transfer of a methyl group from 5-methyltetrahydrofolate to homocysteine resulting in methionine formation. This Serratia proteamaculans (strain 568) protein is 5-methyltetrahydropteroyltriglutamate--homocysteine methyltransferase.